We begin with the raw amino-acid sequence, 611 residues long: Glutamine--fructose-6-phosphate aminotransferase [isomerizing] (611 aa).

The Nucleophile; for GATase activity role is filled by Cys2. Residues 2–219 (CGIVGAVAER…EGDIAEIRRD (218 aa)) form the Glutamine amidotransferase type-2 domain. SIS domains lie at 287 to 427 (AADL…VRGT) and 460 to 601 (IAEL…VDQP). Lys606 functions as the For Fru-6P isomerization activity in the catalytic mechanism.

Homodimer.

The protein resides in the cytoplasm. The catalysed reaction is D-fructose 6-phosphate + L-glutamine = D-glucosamine 6-phosphate + L-glutamate. Catalyzes the first step in hexosamine metabolism, converting fructose-6P into glucosamine-6P using glutamine as a nitrogen source. The polypeptide is Glutamine--fructose-6-phosphate aminotransferase [isomerizing] (Pseudomonas putida (strain ATCC 47054 / DSM 6125 / CFBP 8728 / NCIMB 11950 / KT2440)).